Here is a 737-residue protein sequence, read N- to C-terminus: ARMADILLO BTB ARABIDOPSIS PROTEIN 1 (737 aa).

ARM repeat units lie at residues 112 to 154 (DENV…KDCA), 165 to 212 (PGYQ…NIAH), 215 to 254 (PRIKTNIRVEGGIAPLVELLNFPDVKVQRAAAGALRTVSF), 257 to 296 (DENKSQIVELNALPTLVLMLQSQDSTVHGEAIGAIGNLVH), 299 to 338 (PDIKKEVIRAGALQPVIGLLSSTCLETQREAALLIGQFAA), 341 to 380 (SDCKVHIAQRGAITPLIKMLESSDEQVVEMSAFALGRLAQ), 382 to 421 (AHNQAGIAHRGGIISLLNLLDVKTGSVQHNAAFALYGLAD), 456 to 495 (LKRLQNKIHGPVLNQLLYLMRTAEKTVQIRIALALAHLCD), and 497 to 536 (KDGKLIFIDNNGVEFLLELLYFSSNKQQRYSSSALYELAK). A BTB domain is found at 568–635 (SDVTFLIDGK…IYSGRINIAK (68 aa)).

As to quaternary structure, forms a heterodimeric complex with TCP24. Interacts with the origin recognition complex (preRC) components ORC1A, ORC1B, CDT1A and CDT1B. Interacts with DUF7/AIP1. As to expression, weakly expressed in the emerging lateral roots and mainly expressed in the shoot apex, young leaves and flower buds.

It is found in the nucleus. It functions in the pathway protein modification; protein ubiquitination. In terms of biological role, may act as a substrate-specific adapter of an E3 ubiquitin-protein ligase complex (CUL3-RBX1-BTB) which mediates the ubiquitination and subsequent proteasomal degradation of target proteins. In association with TCP24, exerts a negative role in cell proliferation in leaves, possibly by inhibiting mitotic DNA replication. The sequence is that of ARMADILLO BTB ARABIDOPSIS PROTEIN 1 (ABAP1) from Arabidopsis thaliana (Mouse-ear cress).